A 628-amino-acid chain; its full sequence is Biosynthetic arginine decarboxylase (628 aa).

Lys99 carries the post-translational modification N6-(pyridoxal phosphate)lysine. 279–289 is a substrate binding site; the sequence is VDVGGGLGIDY.

Belongs to the Orn/Lys/Arg decarboxylase class-II family. SpeA subfamily. It depends on Mg(2+) as a cofactor. Requires pyridoxal 5'-phosphate as cofactor.

The enzyme catalyses L-arginine + H(+) = agmatine + CO2. It participates in amine and polyamine biosynthesis; agmatine biosynthesis; agmatine from L-arginine: step 1/1. Its function is as follows. Catalyzes the biosynthesis of agmatine from arginine. The polypeptide is Biosynthetic arginine decarboxylase (Xylella fastidiosa (strain M23)).